Reading from the N-terminus, the 868-residue chain is Probable inorganic carbon transporter subunit DabA (868 aa).

Zn(2+) is bound by residues Cys392, Asp394, His574, and Cys589.

Belongs to the inorganic carbon transporter (TC 9.A.2) DabA family. As to quaternary structure, forms a complex with DabB. The cofactor is Zn(2+).

The protein resides in the cell membrane. Functionally, part of an energy-coupled inorganic carbon pump. The chain is Probable inorganic carbon transporter subunit DabA from Bacillus cereus (strain B4264).